The following is an 811-amino-acid chain: Glycerol-3-phosphate acyltransferase (811 aa).

The short motif at 309 to 314 (CHRSHM) is the HXXXXD motif element.

This sequence belongs to the GPAT/DAPAT family.

It is found in the cell inner membrane. It catalyses the reaction sn-glycerol 3-phosphate + an acyl-CoA = a 1-acyl-sn-glycero-3-phosphate + CoA. The protein operates within phospholipid metabolism; CDP-diacylglycerol biosynthesis; CDP-diacylglycerol from sn-glycerol 3-phosphate: step 1/3. This Colwellia psychrerythraea (strain 34H / ATCC BAA-681) (Vibrio psychroerythus) protein is Glycerol-3-phosphate acyltransferase.